The following is a 506-amino-acid chain: DNA nucleotidylexotransferase (506 aa).

Residues 11-17 (SQRKRQK) carry the Nuclear localization signal motif. The BRCT domain maps to 27-124 (GYEIKFNKLV…RPVDLEKKYH (98 aa)). Residues 258–262 (VGVKT) are involved in DNA binding. A 2'-deoxyribonucleoside 5'-triphosphate contacts are provided by residues 333–338 (GFRRGK) and 342–345 (HDID). Positions 343, 345, and 430 each coordinate Mg(2+). 445-446 (GW) lines the a 2'-deoxyribonucleoside 5'-triphosphate pocket.

The protein belongs to the DNA polymerase type-X family. It depends on Mg(2+) as a cofactor.

It localises to the nucleus. The catalysed reaction is DNA(n) + a 2'-deoxyribonucleoside 5'-triphosphate = DNA(n+1) + diphosphate. Functionally, template-independent DNA polymerase which catalyzes the random addition of deoxynucleoside 5'-triphosphate to the 3'-end of a DNA initiator. One of the in vivo functions of this enzyme is the addition of nucleotides at the junction (N region) of rearranged Ig heavy chain and T-cell receptor gene segments during the maturation of B- and T-cells. This is DNA nucleotidylexotransferase (DNTT) from Gallus gallus (Chicken).